The chain runs to 699 residues: Elongation factor G (699 aa).

Residues 8 to 288 (EDYRNFGIMA…AVVDYLPSPM (281 aa)) enclose the tr-type G domain. GTP is bound by residues 17–24 (AHIDAGKT), 86–90 (DTPGH), and 140–143 (NKMD).

It belongs to the TRAFAC class translation factor GTPase superfamily. Classic translation factor GTPase family. EF-G/EF-2 subfamily.

Its subcellular location is the cytoplasm. Functionally, catalyzes the GTP-dependent ribosomal translocation step during translation elongation. During this step, the ribosome changes from the pre-translocational (PRE) to the post-translocational (POST) state as the newly formed A-site-bound peptidyl-tRNA and P-site-bound deacylated tRNA move to the P and E sites, respectively. Catalyzes the coordinated movement of the two tRNA molecules, the mRNA and conformational changes in the ribosome. The chain is Elongation factor G from Rhizobium johnstonii (strain DSM 114642 / LMG 32736 / 3841) (Rhizobium leguminosarum bv. viciae).